The sequence spans 372 residues: Aminomethyltransferase (372 aa).

This sequence belongs to the GcvT family. In terms of assembly, the glycine cleavage system is composed of four proteins: P, T, L and H.

The enzyme catalyses N(6)-[(R)-S(8)-aminomethyldihydrolipoyl]-L-lysyl-[protein] + (6S)-5,6,7,8-tetrahydrofolate = N(6)-[(R)-dihydrolipoyl]-L-lysyl-[protein] + (6R)-5,10-methylene-5,6,7,8-tetrahydrofolate + NH4(+). Its function is as follows. The glycine cleavage system catalyzes the degradation of glycine. The polypeptide is Aminomethyltransferase (Burkholderia ambifaria (strain MC40-6)).